Consider the following 117-residue polypeptide: UPF0102 protein FTN_0424 (117 aa).

Belongs to the UPF0102 family.

This is UPF0102 protein FTN_0424 from Francisella tularensis subsp. novicida (strain U112).